Consider the following 135-residue polypeptide: Small ribosomal subunit protein eS6 (135 aa).

This sequence belongs to the eukaryotic ribosomal protein eS6 family.

This chain is Small ribosomal subunit protein eS6, found in Methanococcoides burtonii (strain DSM 6242 / NBRC 107633 / OCM 468 / ACE-M).